Reading from the N-terminus, the 143-residue chain is uncharacterized protein (143 aa).

The N-terminal 38 residues, 1 to 38 (MKYWKYLSQLTIRRPLTYNNALLYRNRFPSILTWKRSA), are a transit peptide targeting the mitochondrion.

The protein resides in the mitochondrion. This is an uncharacterized protein from Schizosaccharomyces pombe (strain 972 / ATCC 24843) (Fission yeast).